Here is an 835-residue protein sequence, read N- to C-terminus: Protein translocase subunit SecA 1 (835 aa).

ATP is bound by residues Gln85, 103-107 (GEGKT), and Asp492. Residues 788–807 (VQGEAVHPSSDGEEAKKKPV) form a disordered region. Zn(2+)-binding residues include Cys819, Cys821, Cys830, and Cys831.

Belongs to the SecA family. Monomer and homodimer. Part of the essential Sec protein translocation apparatus which comprises SecA, SecYEG and auxiliary proteins SecDF. Other proteins may also be involved. The cofactor is Zn(2+).

The protein resides in the cell membrane. It is found in the cytoplasm. It catalyses the reaction ATP + H2O + cellular proteinSide 1 = ADP + phosphate + cellular proteinSide 2.. Part of the Sec protein translocase complex. Interacts with the SecYEG preprotein conducting channel. Has a central role in coupling the hydrolysis of ATP to the transfer of proteins into and across the cell membrane, serving as an ATP-driven molecular motor driving the stepwise translocation of polypeptide chains across the membrane. The sequence is that of Protein translocase subunit SecA 1 from Bacillus thuringiensis subsp. konkukian (strain 97-27).